A 313-amino-acid polypeptide reads, in one-letter code: Small glutamine-rich tetratricopeptide repeat-containing protein alpha (313 aa).

Residues 69-97 (KELPPDLRSPQETPPSEEDSAEAERLKTE) form a disordered region. Position 77 is a phosphoserine (serine 77). Threonine 81 is modified (phosphothreonine). Position 84 is a phosphoserine (serine 84). TPR repeat units follow at residues 91 to 124 (AERL…NPAN), 125 to 158 (AVYF…DPSY), and 159 to 192 (SKAY…DPDN). The residue at position 137 (lysine 137) is an N6-acetyllysine. A Phosphoserine modification is found at serine 301. Threonine 303 carries the phosphothreonine modification. Serine 305 bears the Phosphoserine mark.

The protein belongs to the SGT family. In terms of assembly, homodimer. Homooligomer. Interacts with DNAJC5 and DNAJC5B. Interacts (via TPR repeats) with HSP90AA1. Interacts (via Gln-rich region) with SLC2A1. Interacts with HSP90AB1. Interacts (via TPR repeats) with HSPA8/Hsc70; the interaction is direct. Interacts with BAG6 (via ubiquitin-like domain); interaction prevents interaction between BAG6 and RNF126. Forms a multiprotein complex, at least composed of DNAJB12, DNAJB14, HSPA8/Hsc70 and SGTA; interaction with DNAJB14 and HSPA8/Hsc70 is direct.

The protein localises to the cytoplasm. Its subcellular location is the nucleus. Functionally, co-chaperone that binds misfolded and hydrophobic patches-containing client proteins in the cytosol. Mediates their targeting to the endoplasmic reticulum but also regulates their sorting to the proteasome when targeting fails. Functions in tail-anchored/type II transmembrane proteins membrane insertion constituting with ASNA1 and the BAG6 complex a targeting module. Functions upstream of the BAG6 complex and ASNA1, binding more rapidly the transmembrane domain of newly synthesized proteins. It is also involved in the regulation of the endoplasmic reticulum-associated misfolded protein catabolic process via its interaction with BAG6: collaborates with the BAG6 complex to maintain hydrophobic substrates in non-ubiquitinated states. Competes with RNF126 for interaction with BAG6, preventing the ubiquitination of client proteins associated with the BAG6 complex. Binds directly to HSC70 and HSP70 and regulates their ATPase activity. The protein is Small glutamine-rich tetratricopeptide repeat-containing protein alpha (SGTA) of Bos taurus (Bovine).